Consider the following 232-residue polypeptide: UPF0758 protein FN0909 (232 aa).

One can recognise an MPN domain in the interval 110 to 232 (KISNKDILLK…YFSFLEEGLI (123 aa)). Residues H181, H183, and D194 each contribute to the Zn(2+) site. A JAMM motif motif is present at residues 181–194 (HNHPSDNITPSKSD).

Belongs to the UPF0758 family.

This is UPF0758 protein FN0909 from Fusobacterium nucleatum subsp. nucleatum (strain ATCC 25586 / DSM 15643 / BCRC 10681 / CIP 101130 / JCM 8532 / KCTC 2640 / LMG 13131 / VPI 4355).